The chain runs to 232 residues: Sec-independent protein translocase protein TatB (232 aa).

The chain crosses the membrane as a helical span at residues 1-21 (MFDIGFGELMLLFVIGLVVLG). Disordered stretches follow at residues 108-129 (EPHTIHNPLVTDPEALHDGVTP) and 176-232 (AAST…NNDR). 2 stretches are compositionally biased toward low complexity: residues 189–203 (ADSAANLATQAATPA) and 214–232 (RAATATGPASSTSPLNNDR).

It belongs to the TatB family. As to quaternary structure, the Tat system comprises two distinct complexes: a TatABC complex, containing multiple copies of TatA, TatB and TatC subunits, and a separate TatA complex, containing only TatA subunits. Substrates initially bind to the TatABC complex, which probably triggers association of the separate TatA complex to form the active translocon.

It is found in the cell inner membrane. Part of the twin-arginine translocation (Tat) system that transports large folded proteins containing a characteristic twin-arginine motif in their signal peptide across membranes. Together with TatC, TatB is part of a receptor directly interacting with Tat signal peptides. TatB may form an oligomeric binding site that transiently accommodates folded Tat precursor proteins before their translocation. The polypeptide is Sec-independent protein translocase protein TatB (Sodalis glossinidius (strain morsitans)).